Consider the following 358-residue polypeptide: cAMP-dependent protein kinase catalytic subunit PRKX (358 aa).

Residue Met1 is modified to N-acetylmethionine. Residues 1–34 (MEAPGLAQAAAAESDSRKVAEETPDGAPALCPSP) form a disordered region. The region spanning 49–303 (FDTLATVGTG…ANDVKHHRWF (255 aa)) is the Protein kinase domain. ATP contacts are provided by residues 55–63 (VGTGTFGRV) and Lys78. Asp172 functions as the Proton acceptor in the catalytic mechanism. Residue Thr203 is modified to Phosphothreonine. Residues 304 to 358 (RSVDWEAVPQRKLKPPIVPKIAGDGDTSNFETYPENDWDTAAPVPQKDLEIFKNF) form the AGC-kinase C-terminal domain.

Belongs to the protein kinase superfamily. AGC Ser/Thr protein kinase family. cAMP subfamily. Like other cAMP-dependent protein kinases, the inactive holoenzyme is probably composed of 2 PRKX catalytic subunits and a dimer of regulatory subunits. Interacts (cAMP-dependent) specifically with the regulatory subunits PRKAR1A and PRKAR1B. Compared to other cAMP-dependent serine/threonine protein kinases, does not interact with the 2 other PKA regulatory subunits PRKAR2A and PRKAR2B. Interacts with cAMP-dependent protein kinase inhibitor/PKI proteins; inhibits PRKX. Interacts with GPKOW. Interacts with SMAD6. Interacts with PKD1; involved in differentiation and controlled morphogenesis of the kidney. Interacts with PIN1 (via WW domain). Phosphorylated; autophosphorylates in vitro. In terms of tissue distribution, widely expressed (at protein level). Specifically expressed in blood by macrophages and granulocytes according to PubMed:9860982.

The protein localises to the cytoplasm. It is found in the nucleus. The enzyme catalyses L-seryl-[protein] + ATP = O-phospho-L-seryl-[protein] + ADP + H(+). It carries out the reaction L-threonyl-[protein] + ATP = O-phospho-L-threonyl-[protein] + ADP + H(+). Its activity is regulated as follows. Binding of cAMP to the PRKAR1A or PRKAR1B regulatory subunits induces dissociation of the holoenzyme heterotetramer. The released monomeric PRKX is then active and able to phosphorylate its substrates. Its function is as follows. Serine/threonine protein kinase regulated by and mediating cAMP signaling in cells. Acts through phosphorylation of downstream targets that may include CREB, SMAD6 and PKD1 and has multiple functions in cellular differentiation and epithelial morphogenesis. Regulates myeloid cell differentiation through SMAD6 phosphorylation. Involved in nephrogenesis by stimulating renal epithelial cell migration and tubulogenesis. Also involved in angiogenesis through stimulation of endothelial cell proliferation, migration and vascular-like structure formation. The polypeptide is cAMP-dependent protein kinase catalytic subunit PRKX (PRKX) (Homo sapiens (Human)).